We begin with the raw amino-acid sequence, 782 residues long: uncharacterized protein (782 aa).

Disordered regions lie at residues 1–127 (MTTT…SAMK), 205–234 (NAAA…SYNP), and 308–355 (PYNF…SYLR). A compositionally biased stretch (basic and acidic residues) spans 24-54 (KPQEEPTMKDKALLFEKQRQEKKMKHTEAKM). The segment covering 82–118 (KNVNNATSTNNATSTKNNTKNTPKNTPKNIPKNTTAK) has biased composition (low complexity). A compositionally biased stretch (polar residues) spans 312-324 (ARNNHGSDVSSAM). Basic and acidic residues predominate over residues 326 to 336 (NARRQASETRR). Positions 337–346 (SNLSSYNDRN) are enriched in polar residues. Residues 361-628 (MEKIRTEVDK…ERLRERLREL (268 aa)) are a coiled coil. Over residues 629 to 668 (GSRDRSYNRSSRDRSHDRLYERSPRSRDRSSRDRSRDRYS) the composition is skewed to basic and acidic residues. The disordered stretch occupies residues 629 to 689 (GSRDRSYNRS…SDSVKDYSVG (61 aa)). Residues 669-678 (RSRSRSRYRR) show a composition bias toward basic residues. Residues 679–689 (RSDSVKDYSVG) show a composition bias toward basic and acidic residues.

This is an uncharacterized protein from Yarrowia lipolytica (strain CLIB 122 / E 150) (Yeast).